A 309-amino-acid chain; its full sequence is Ubiquitin-conjugating enzyme E2 32 (309 aa).

The 156-residue stretch at 11-166 folds into the UBC core domain; that stretch reads PAVKRILQEV…ERQKIIDEIH (156 aa). Cys93 serves as the catalytic Glycyl thioester intermediate. A helical transmembrane segment spans residues 275-295; it reads FTWAAVGLTIAIMVLLLKKFI.

The protein belongs to the ubiquitin-conjugating enzyme family.

The protein resides in the membrane. The enzyme catalyses S-ubiquitinyl-[E1 ubiquitin-activating enzyme]-L-cysteine + [E2 ubiquitin-conjugating enzyme]-L-cysteine = [E1 ubiquitin-activating enzyme]-L-cysteine + S-ubiquitinyl-[E2 ubiquitin-conjugating enzyme]-L-cysteine.. It functions in the pathway protein modification; protein ubiquitination. In terms of biological role, accepts the ubiquitin from the E1 complex and catalyzes its covalent attachment to other proteins. The sequence is that of Ubiquitin-conjugating enzyme E2 32 (UBC32) from Arabidopsis thaliana (Mouse-ear cress).